The chain runs to 203 residues: Outer-membrane lipoprotein LolB (203 aa).

The first 21 residues, 1-21 (MTGRWSPRLLAGLLAALVLSG), serve as a signal peptide directing secretion. Cysteine 22 is lipidated: N-palmitoyl cysteine. Residue cysteine 22 is the site of S-diacylglycerol cysteine attachment.

Belongs to the LolB family. In terms of assembly, monomer.

Its subcellular location is the cell outer membrane. Functionally, plays a critical role in the incorporation of lipoproteins in the outer membrane after they are released by the LolA protein. The sequence is that of Outer-membrane lipoprotein LolB from Halorhodospira halophila (strain DSM 244 / SL1) (Ectothiorhodospira halophila (strain DSM 244 / SL1)).